The following is a 428-amino-acid chain: Glutamate-1-semialdehyde 2,1-aminomutase (428 aa).

At Lys-265 the chain carries N6-(pyridoxal phosphate)lysine.

It belongs to the class-III pyridoxal-phosphate-dependent aminotransferase family. HemL subfamily. In terms of assembly, homodimer. Pyridoxal 5'-phosphate is required as a cofactor.

The protein localises to the cytoplasm. The enzyme catalyses (S)-4-amino-5-oxopentanoate = 5-aminolevulinate. The protein operates within porphyrin-containing compound metabolism; protoporphyrin-IX biosynthesis; 5-aminolevulinate from L-glutamyl-tRNA(Glu): step 2/2. The sequence is that of Glutamate-1-semialdehyde 2,1-aminomutase from Methylobacillus flagellatus (strain ATCC 51484 / DSM 6875 / VKM B-1610 / KT).